The chain runs to 339 residues: Glycerol-3-phosphate dehydrogenase [NAD(P)+] (339 aa).

4 residues coordinate NADPH: serine 14, tyrosine 15, histidine 35, and lysine 109. Residues lysine 109, glycine 138, and threonine 140 each contribute to the sn-glycerol 3-phosphate site. Residue alanine 142 coordinates NADPH. Positions 194, 247, 257, 258, and 259 each coordinate sn-glycerol 3-phosphate. Residue lysine 194 is the Proton acceptor of the active site. An NADPH-binding site is contributed by arginine 258. 2 residues coordinate NADPH: valine 282 and glutamate 284.

This sequence belongs to the NAD-dependent glycerol-3-phosphate dehydrogenase family.

The protein resides in the cytoplasm. The enzyme catalyses sn-glycerol 3-phosphate + NAD(+) = dihydroxyacetone phosphate + NADH + H(+). It carries out the reaction sn-glycerol 3-phosphate + NADP(+) = dihydroxyacetone phosphate + NADPH + H(+). It participates in membrane lipid metabolism; glycerophospholipid metabolism. Its function is as follows. Catalyzes the reduction of the glycolytic intermediate dihydroxyacetone phosphate (DHAP) to sn-glycerol 3-phosphate (G3P), the key precursor for phospholipid synthesis. This Shewanella pealeana (strain ATCC 700345 / ANG-SQ1) protein is Glycerol-3-phosphate dehydrogenase [NAD(P)+].